The following is an 89-amino-acid chain: Small ribosomal subunit protein uS15 (89 aa).

Belongs to the universal ribosomal protein uS15 family. In terms of assembly, part of the 30S ribosomal subunit. Forms a bridge to the 50S subunit in the 70S ribosome, contacting the 23S rRNA.

In terms of biological role, one of the primary rRNA binding proteins, it binds directly to 16S rRNA where it helps nucleate assembly of the platform of the 30S subunit by binding and bridging several RNA helices of the 16S rRNA. Forms an intersubunit bridge (bridge B4) with the 23S rRNA of the 50S subunit in the ribosome. The sequence is that of Small ribosomal subunit protein uS15 from Salmonella schwarzengrund (strain CVM19633).